The following is a 134-amino-acid chain: T-cell receptor alpha chain V region RL-5 (134 aa).

An N-terminal signal peptide occupies residues 1 to 20 (MFSASCSVTVVVLLITVRRT). Residues 21-114 (NGASVTQTEG…DSAVYYCALR (94 aa)) are v segment. Positions 115–134 (RGASNKLTLGTGTLLKVELN) are j segment. An N-linked (GlcNAc...) asparagine glycan is attached at asparagine 134.

Rearrangement with the C region would elongate the sequence with Ile-Thr-; which creates a potential N-glycosylation site at Asn-134.

In Oryctolagus cuniculus (Rabbit), this protein is T-cell receptor alpha chain V region RL-5.